Here is a 63-residue protein sequence, read N- to C-terminus: Cytochrome c oxidase subunit 7C, mitochondrial (63 aa).

Residues 1–16 (MLGQSIRRFTTSVVRR) constitute a mitochondrion transit peptide. At 17–33 (SHYEEGPGKNLPFSVEN) the chain is on the mitochondrial matrix side. Residue K25 is modified to N6-acetyllysine; alternate. Residue K25 is modified to N6-succinyllysine; alternate. A helical transmembrane segment spans residues 34 to 60 (KWSLLAKMCLYFGSAFATPFLIVRHQL). Over 61–63 (LKT) the chain is Mitochondrial intermembrane.

This sequence belongs to the cytochrome c oxidase VIIc family. In terms of assembly, component of the cytochrome c oxidase (complex IV, CIV), a multisubunit enzyme composed of 14 subunits. The complex is composed of a catalytic core of 3 subunits MT-CO1, MT-CO2 and MT-CO3, encoded in the mitochondrial DNA, and 11 supernumerary subunits COX4I, COX5A, COX5B, COX6A, COX6B, COX6C, COX7A, COX7B, COX7C, COX8 and NDUFA4, which are encoded in the nuclear genome. The complex exists as a monomer or a dimer and forms supercomplexes (SCs) in the inner mitochondrial membrane with NADH-ubiquinone oxidoreductase (complex I, CI) and ubiquinol-cytochrome c oxidoreductase (cytochrome b-c1 complex, complex III, CIII), resulting in different assemblies (supercomplex SCI(1)III(2)IV(1) and megacomplex MCI(2)III(2)IV(2)). Interacts with RAB5IF.

The protein localises to the mitochondrion inner membrane. It functions in the pathway energy metabolism; oxidative phosphorylation. Functionally, component of the cytochrome c oxidase, the last enzyme in the mitochondrial electron transport chain which drives oxidative phosphorylation. The respiratory chain contains 3 multisubunit complexes succinate dehydrogenase (complex II, CII), ubiquinol-cytochrome c oxidoreductase (cytochrome b-c1 complex, complex III, CIII) and cytochrome c oxidase (complex IV, CIV), that cooperate to transfer electrons derived from NADH and succinate to molecular oxygen, creating an electrochemical gradient over the inner membrane that drives transmembrane transport and the ATP synthase. Cytochrome c oxidase is the component of the respiratory chain that catalyzes the reduction of oxygen to water. Electrons originating from reduced cytochrome c in the intermembrane space (IMS) are transferred via the dinuclear copper A center (CU(A)) of subunit 2 and heme A of subunit 1 to the active site in subunit 1, a binuclear center (BNC) formed by heme A3 and copper B (CU(B)). The BNC reduces molecular oxygen to 2 water molecules using 4 electrons from cytochrome c in the IMS and 4 protons from the mitochondrial matrix. In Pongo pygmaeus (Bornean orangutan), this protein is Cytochrome c oxidase subunit 7C, mitochondrial (COX7C).